A 261-amino-acid polypeptide reads, in one-letter code: Putative outer membrane protein CT_371 (261 aa).

An N-terminal signal peptide occupies residues methionine 1–alanine 18.

The protein localises to the cell outer membrane. This Chlamydia trachomatis serovar D (strain ATCC VR-885 / DSM 19411 / UW-3/Cx) protein is Putative outer membrane protein CT_371.